The following is a 394-amino-acid chain: Elongation factor Tu (394 aa).

The 195-residue stretch at 10–204 folds into the tr-type G domain; that stretch reads KPHVNVGTIG…ALDSYIPEPE (195 aa). The interval 19–26 is G1; sequence GHVDHGKT. 19–26 is a GTP binding site; that stretch reads GHVDHGKT. A Mg(2+)-binding site is contributed by Thr-26. The G2 stretch occupies residues 60–64; that stretch reads GITIS. Residues 81–84 form a G3 region; the sequence is DCPG. Residues 81–85 and 136–139 each bind GTP; these read DCPGH and NKCD. A G4 region spans residues 136–139; sequence NKCD. Positions 174–176 are G5; the sequence is SAL.

It belongs to the TRAFAC class translation factor GTPase superfamily. Classic translation factor GTPase family. EF-Tu/EF-1A subfamily. In terms of assembly, monomer.

It is found in the cytoplasm. It catalyses the reaction GTP + H2O = GDP + phosphate + H(+). In terms of biological role, GTP hydrolase that promotes the GTP-dependent binding of aminoacyl-tRNA to the A-site of ribosomes during protein biosynthesis. The polypeptide is Elongation factor Tu (Alteromonas mediterranea (strain DSM 17117 / CIP 110805 / LMG 28347 / Deep ecotype)).